The sequence spans 665 residues: Translation factor guf1, mitochondrial (665 aa).

The N-terminal 53 residues, 1–53 (MRGCLQVLRWLSTSPARRPVSSGLRLRSYEIVSPSILRPFTSTVRRQAQASRN), are a transit peptide targeting the mitochondrion. Positions 67 to 247 (ERFRNFCIVA…TVIERIPAPV (181 aa)) constitute a tr-type G domain. GTP is bound by residues 76 to 83 (AHVDHGKS), 140 to 144 (DTPGH), and 194 to 197 (NKVD).

Belongs to the TRAFAC class translation factor GTPase superfamily. Classic translation factor GTPase family. LepA subfamily.

It is found in the mitochondrion inner membrane. The catalysed reaction is GTP + H2O = GDP + phosphate + H(+). Promotes mitochondrial protein synthesis. May act as a fidelity factor of the translation reaction, by catalyzing a one-codon backward translocation of tRNAs on improperly translocated ribosomes. Binds to mitochondrial ribosomes in a GTP-dependent manner. This chain is Translation factor guf1, mitochondrial (guf1), found in Talaromyces stipitatus (strain ATCC 10500 / CBS 375.48 / QM 6759 / NRRL 1006) (Penicillium stipitatum).